The chain runs to 207 residues: Small ribosomal subunit protein uS4A (207 aa).

Residues 98 to 163 form the S4 RNA-binding domain; it reads TRLDNLVYRL…SPKFKELKEN (66 aa).

This sequence belongs to the universal ribosomal protein uS4 family. As to quaternary structure, part of the 30S ribosomal subunit. Contacts protein S5. The interaction surface between S4 and S5 is involved in control of translational fidelity.

Its function is as follows. One of the primary rRNA binding proteins, it binds directly to 16S rRNA where it nucleates assembly of the body of the 30S subunit. Functionally, with S5 and S12 plays an important role in translational accuracy. In Alkaliphilus metalliredigens (strain QYMF), this protein is Small ribosomal subunit protein uS4A.